The sequence spans 470 residues: Choline/ethanolamine transporter flvcr2a (470 aa).

Residues 1-23 are Cytoplasmic-facing; that stretch reads MCDKADNHIDVQPEGNLEVSSVS. Residues 24–48 form a helical membrane-spanning segment; the sequence is STRLYRRRWVILLLFSSYSLCNAFQ. Choline is bound by residues Asn-45, Ala-46, and Trp-49. Residues 49–66 are Extracellular-facing; that stretch reads WIQYGIINNIFMKFYQVS. The chain crosses the membrane as a helical span at residues 67 to 94; that stretch reads SFAVDWLSMVYMLTYIPFIFPVTWLLER. Over 95 to 96 the chain is Cytoplasmic; sequence KG. Residues 97–116 traverse the membrane as a helical segment; it reads LRVVALLAASINCAGTWIKV. Residues 117 to 123 are Extracellular-facing; that stretch reads ASVQPSL. The helical transmembrane segment at 124 to 152 threads the bilayer; it reads FWVTMLGQFACSCAQVFILGMPSQVASVW. Residues Gln-138 and Leu-142 each coordinate choline. At 153–157 the chain is on the cytoplasmic side; sequence FGSDE. A helical transmembrane segment spans residues 158–183; that stretch reads VSTACAIGVFGNQLGIAIGFLVPPVL. The Extracellular portion of the chain corresponds to 184 to 188; sequence VPNVE. The helical transmembrane segment at 189 to 218 threads the bilayer; the sequence is DMGELAEHISIMFYITAAVATLIFLLVVFV. The Cytoplasmic portion of the chain corresponds to 219 to 254; sequence FQEKPETPPSLAQVALRNMPTGQHSYLASIARLMCN. The helical transmembrane segment at 255-285 threads the bilayer; it reads KPFILLLISYGLNVGSFYAVSTLLNRMIIEH. Tyr-272 serves as a coordination point for choline. Residues 286 to 289 lie on the Extracellular side of the membrane; the sequence is YPGE. A helical membrane pass occupies residues 290–318; the sequence is EVNAGRIGLTLVVAGVVGSLICGVWLDKT. Residues 319–320 lie on the Cytoplasmic side of the membrane; the sequence is KT. A helical membrane pass occupies residues 321 to 343; it reads YKQTTLSVYLLSFVGMLIYSFTL. Residues 344-346 lie on the Extracellular side of the membrane; sequence NLG. A helical transmembrane segment spans residues 347-376; sequence HLWLVFLTSGVLGFFMTGYLPLGFEFAVEL. Residues 377–384 lie on the Cytoplasmic side of the membrane; that stretch reads TYPESEGT. Residues 385 to 410 form a helical membrane-spanning segment; sequence SSGLLNCSAQVFGIAFTIIQGKIIDH. Gln-394 is a binding site for choline. The Extracellular portion of the chain corresponds to 411-412; sequence FG. Residues 413–435 traverse the membrane as a helical segment; it reads TLAGNIFLCVFLLIGSIMTAFIK. The Cytoplasmic portion of the chain corresponds to 436–470; that stretch reads SDLRRQKANQETGGNADSSVHPQHGETLPVKEVKM. A compositionally biased stretch (polar residues) spans 445-456; that stretch reads QETGGNADSSVH. The tract at residues 445–470 is disordered; the sequence is QETGGNADSSVHPQHGETLPVKEVKM.

The protein belongs to the major facilitator superfamily. Feline leukemia virus subgroup C receptor (TC 2.A.1.28.1) family.

The protein localises to the cell membrane. Its subcellular location is the mitochondrion membrane. It is found in the endoplasmic reticulum membrane. The enzyme catalyses choline(out) = choline(in). It catalyses the reaction ethanolamine(in) = ethanolamine(out). The catalysed reaction is heme b(in) = heme b(out). Its function is as follows. Choline uniporter that specifically mediates choline uptake at the blood-brain-barrier. Responsible for the majority of choline uptake across the blood-brain-barrier from the circulation into the brain. Choline, a nutrient critical for brain development, is a precursor of phosphatidylcholine, as well as betaine. Also mediates transport of ethanolamine. Choline and ethanolamine transport is not coupled with proton transport and is exclusively driven by the choline gradient across the plasma membrane. Also acts as a heme b transporter. The protein is Choline/ethanolamine transporter flvcr2a of Danio rerio (Zebrafish).